A 339-amino-acid polypeptide reads, in one-letter code: tRNA N6-adenosine threonylcarbamoyltransferase (339 aa).

Histidine 111 and histidine 115 together coordinate Fe cation. Substrate-binding positions include leucine 139 to glycine 143, aspartate 172, glycine 185, aspartate 189, and asparagine 280. A Fe cation-binding site is contributed by aspartate 308.

The protein belongs to the KAE1 / TsaD family. The cofactor is Fe(2+).

Its subcellular location is the cytoplasm. It carries out the reaction L-threonylcarbamoyladenylate + adenosine(37) in tRNA = N(6)-L-threonylcarbamoyladenosine(37) in tRNA + AMP + H(+). Functionally, required for the formation of a threonylcarbamoyl group on adenosine at position 37 (t(6)A37) in tRNAs that read codons beginning with adenine. Is involved in the transfer of the threonylcarbamoyl moiety of threonylcarbamoyl-AMP (TC-AMP) to the N6 group of A37, together with TsaE and TsaB. TsaD likely plays a direct catalytic role in this reaction. This is tRNA N6-adenosine threonylcarbamoyltransferase from Bacteroides fragilis (strain ATCC 25285 / DSM 2151 / CCUG 4856 / JCM 11019 / LMG 10263 / NCTC 9343 / Onslow / VPI 2553 / EN-2).